Consider the following 238-residue polypeptide: Adapter protein MecA (238 aa).

A compositionally biased stretch (basic and acidic residues) spans 120–136; the sequence is QQQKDNKQNQDQNERNR. Positions 120–139 are disordered; the sequence is QQQKDNKQNQDQNERNRQNT.

Belongs to the MecA family. Homodimer.

Enables the recognition and targeting of unfolded and aggregated proteins to the ClpC protease or to other proteins involved in proteolysis. The chain is Adapter protein MecA from Staphylococcus saprophyticus subsp. saprophyticus (strain ATCC 15305 / DSM 20229 / NCIMB 8711 / NCTC 7292 / S-41).